Reading from the N-terminus, the 306-residue chain is Ribose-5-phosphate isomerase (306 aa).

The disordered stretch occupies residues 45-68 (GRAQFGVGSTSTSSGDANSVCPAP). The segment covering 51–61 (VGSTSTSSGDA) has biased composition (polar residues). A Phosphoserine modification is found at Ser-102.

This sequence belongs to the ribose 5-phosphate isomerase family.

The catalysed reaction is aldehydo-D-ribose 5-phosphate = D-ribulose 5-phosphate. Its pathway is carbohydrate degradation; pentose phosphate pathway; D-ribose 5-phosphate from D-ribulose 5-phosphate (non-oxidative stage): step 1/1. The protein is Ribose-5-phosphate isomerase of Sus scrofa (Pig).